The chain runs to 372 residues: Cytochrome b (372 aa).

A run of 4 helical transmembrane segments spans residues 25-45, 69-90, 105-125, and 170-190; these read FGSMLLTCSIIQMTTGFFLAI, WCLQNLHSIGASMFFICIYIHI, WMSGILLLTILMATSFFGYVL, and FFALHFILPFMIMSTSSIHII. 2 residues coordinate heme b: His75 and His89. Residues His174 and His188 each coordinate heme b. His193 contacts a ubiquinone. Transmembrane regions (helical) follow at residues 218–238, 280–300, 312–332, and 339–358; these read YKDLFMLTLLLFTMMSIMSFS, LGGTLALLLSIMILLLPPFTH, MAQFLFWTMITTFVILTWAAS, and YITISQMASTMYFLFFIINP.

This sequence belongs to the cytochrome b family. In terms of assembly, the cytochrome bc1 complex contains 3 respiratory subunits (MT-CYB, CYC1 and UQCRFS1), 2 core proteins (UQCRC1 and UQCRC2) and probably 6 low-molecular weight proteins. Requires heme b as cofactor.

It localises to the mitochondrion inner membrane. Its function is as follows. Component of the ubiquinol-cytochrome c reductase complex (complex III or cytochrome b-c1 complex) that is part of the mitochondrial respiratory chain. The b-c1 complex mediates electron transfer from ubiquinol to cytochrome c. Contributes to the generation of a proton gradient across the mitochondrial membrane that is then used for ATP synthesis. In Acrochordus granulatus (Rasp-skinned water snake), this protein is Cytochrome b (MT-CYB).